The primary structure comprises 460 residues: Ribosomal protein uS12 methylthiotransferase RimO (460 aa).

The region spanning 16–130 (NKIHFISLGC…ILSAIESKES (115 aa)) is the MTTase N-terminal domain. The [4Fe-4S] cluster site is built by C25, C61, C93, C164, C168, and C171. The 233-residue stretch at 150-382 (STPKHYAYLK…SQTQKKNVEK (233 aa)) folds into the Radical SAM core domain. The 71-residue stretch at 385 to 455 (KQFVGKIVEA…GYDLVGRVVN (71 aa)) folds into the TRAM domain.

It belongs to the methylthiotransferase family. RimO subfamily. [4Fe-4S] cluster serves as cofactor.

Its subcellular location is the cytoplasm. It carries out the reaction L-aspartate(89)-[ribosomal protein uS12]-hydrogen + (sulfur carrier)-SH + AH2 + 2 S-adenosyl-L-methionine = 3-methylsulfanyl-L-aspartate(89)-[ribosomal protein uS12]-hydrogen + (sulfur carrier)-H + 5'-deoxyadenosine + L-methionine + A + S-adenosyl-L-homocysteine + 2 H(+). Catalyzes the methylthiolation of an aspartic acid residue of ribosomal protein uS12. The polypeptide is Ribosomal protein uS12 methylthiotransferase RimO (Chlamydia abortus (strain DSM 27085 / S26/3) (Chlamydophila abortus)).